The following is a 214-amino-acid chain: Pyridoxine/pyridoxamine 5'-phosphate oxidase (214 aa).

Residues 8–11 (RINY) and K66 each bind substrate. Residues 61 to 66 (RILLIK), 76 to 77 (FT), R82, K83, and Q105 contribute to the FMN site. Positions 123, 127, and 131 each coordinate substrate. FMN-binding positions include 140–141 (QS) and W184. 190–192 (RLH) contacts substrate. R194 provides a ligand contact to FMN.

This sequence belongs to the pyridoxamine 5'-phosphate oxidase family. Homodimer. FMN serves as cofactor.

The enzyme catalyses pyridoxamine 5'-phosphate + O2 + H2O = pyridoxal 5'-phosphate + H2O2 + NH4(+). It catalyses the reaction pyridoxine 5'-phosphate + O2 = pyridoxal 5'-phosphate + H2O2. The protein operates within cofactor metabolism; pyridoxal 5'-phosphate salvage; pyridoxal 5'-phosphate from pyridoxamine 5'-phosphate: step 1/1. Its pathway is cofactor metabolism; pyridoxal 5'-phosphate salvage; pyridoxal 5'-phosphate from pyridoxine 5'-phosphate: step 1/1. Functionally, catalyzes the oxidation of either pyridoxine 5'-phosphate (PNP) or pyridoxamine 5'-phosphate (PMP) into pyridoxal 5'-phosphate (PLP). The sequence is that of Pyridoxine/pyridoxamine 5'-phosphate oxidase from Burkholderia vietnamiensis (strain G4 / LMG 22486) (Burkholderia cepacia (strain R1808)).